The following is an 801-amino-acid chain: K(+)-insensitive pyrophosphate-energized proton pump (801 aa).

A run of 5 helical transmembrane segments spans residues 27-47 (VIVM…GILV), 81-101 (TLGV…ADDW), 109-129 (VFFL…MWLA), 170-190 (GVVG…VVLV), and 201-221 (GFGL…GIFT). K222 provides a ligand contact to substrate. D225, D229, N252, and D255 together coordinate Mg(2+). A run of 7 helical transmembrane segments spans residues 261–281 (AGMA…ALIL), 292–312 (AFPL…IFAV), 328–348 (GFFV…YVYL), 372–392 (ILAM…QQLT), 406–426 (IGKS…SVGL), 429–449 (AVYT…LGGT), and 453–473 (LALF…GVIV). D483 is a Mg(2+) binding site. The next 4 helical transmembrane spans lie at 515–535 (AITK…LFGS), 571–591 (VGLI…INAV), 641–661 (LLAV…ALGA), and 663–683 (LAGA…SGGA). Residues D685, D711, and D715 each coordinate Ca(2+). Position 718 (K718) interacts with substrate. The next 2 membrane-spanning stretches (helical) occupy residues 724–744 (AINP…PAVV) and 754–774 (LGVR…AVYI).

Belongs to the H(+)-translocating pyrophosphatase (TC 3.A.10) family. K(+)-insensitive subfamily. As to quaternary structure, homodimer. Requires Mg(2+) as cofactor.

The protein localises to the cell membrane. It carries out the reaction diphosphate + H2O + H(+)(in) = 2 phosphate + 2 H(+)(out). In terms of biological role, proton pump that utilizes the energy of pyrophosphate hydrolysis as the driving force for proton movement across the membrane. Generates a proton motive force. The chain is K(+)-insensitive pyrophosphate-energized proton pump from Streptomyces avermitilis (strain ATCC 31267 / DSM 46492 / JCM 5070 / NBRC 14893 / NCIMB 12804 / NRRL 8165 / MA-4680).